A 355-amino-acid chain; its full sequence is Uroporphyrinogen decarboxylase (355 aa).

Substrate-binding positions include 27–31 (RQAGR), Phe-46, Asp-77, Tyr-154, Ser-209, and His-327.

It belongs to the uroporphyrinogen decarboxylase family. Homodimer.

Its subcellular location is the cytoplasm. It carries out the reaction uroporphyrinogen III + 4 H(+) = coproporphyrinogen III + 4 CO2. It participates in porphyrin-containing compound metabolism; protoporphyrin-IX biosynthesis; coproporphyrinogen-III from 5-aminolevulinate: step 4/4. In terms of biological role, catalyzes the decarboxylation of four acetate groups of uroporphyrinogen-III to yield coproporphyrinogen-III. The protein is Uroporphyrinogen decarboxylase of Nitrosomonas europaea (strain ATCC 19718 / CIP 103999 / KCTC 2705 / NBRC 14298).